A 510-amino-acid chain; its full sequence is D-alanine--D-alanyl carrier protein ligase (510 aa).

157–158 provides a ligand contact to ATP; that stretch reads TS. Aspartate 202 serves as a coordination point for D-alanine. 297–302 contacts ATP; sequence NTYGPT. Residue valine 306 coordinates D-alanine. 2 residues coordinate ATP: aspartate 389 and lysine 498. A D-alanine-binding site is contributed by lysine 498.

This sequence belongs to the ATP-dependent AMP-binding enzyme family. DltA subfamily.

It localises to the cytoplasm. The catalysed reaction is holo-[D-alanyl-carrier protein] + D-alanine + ATP = D-alanyl-[D-alanyl-carrier protein] + AMP + diphosphate. It functions in the pathway cell wall biogenesis; lipoteichoic acid biosynthesis. Catalyzes the first step in the D-alanylation of lipoteichoic acid (LTA), the activation of D-alanine and its transfer onto the D-alanyl carrier protein (Dcp) DltC. In an ATP-dependent two-step reaction, forms a high energy D-alanyl-AMP intermediate, followed by transfer of the D-alanyl residue as a thiol ester to the phosphopantheinyl prosthetic group of the Dcp. D-alanylation of LTA plays an important role in modulating the properties of the cell wall in Gram-positive bacteria, influencing the net charge of the cell wall. This is D-alanine--D-alanyl carrier protein ligase from Listeria welshimeri serovar 6b (strain ATCC 35897 / DSM 20650 / CCUG 15529 / CIP 8149 / NCTC 11857 / SLCC 5334 / V8).